The primary structure comprises 238 residues: Nucleoside diphosphate kinase III, chloroplastic/mitochondrial (238 aa).

The N-terminal 85 residues, 1–85 (MSSQICRSAS…YMIQDQEVLA (85 aa)), are a transit peptide targeting the chloroplast and mitochondrion. K96, F144, R172, T178, R189, and N199 together coordinate ATP. H202 serves as the catalytic Pros-phosphohistidine intermediate.

Belongs to the NDK family. As to quaternary structure, homohexamer. Mg(2+) serves as cofactor.

It is found in the plastid. It localises to the chloroplast thylakoid lumen. The protein localises to the mitochondrion intermembrane space. The enzyme catalyses a 2'-deoxyribonucleoside 5'-diphosphate + ATP = a 2'-deoxyribonucleoside 5'-triphosphate + ADP. The catalysed reaction is a ribonucleoside 5'-diphosphate + ATP = a ribonucleoside 5'-triphosphate + ADP. Its function is as follows. Major role in the synthesis of nucleoside triphosphates other than ATP. The ATP gamma phosphate is transferred to the NDP beta phosphate via a ping-pong mechanism, using a phosphorylated active-site intermediate. Shows the highest specificity towards GDP. This Arabidopsis thaliana (Mouse-ear cress) protein is Nucleoside diphosphate kinase III, chloroplastic/mitochondrial (NDPK3).